The chain runs to 320 residues: Mycothiol acetyltransferase (320 aa).

2 consecutive N-acetyltransferase domains span residues 8–141 (SHLT…RSLR) and 152–320 (LQIR…AALA). Residue Glu36 coordinates 1D-myo-inositol 2-(L-cysteinylamino)-2-deoxy-alpha-D-glucopyranoside. Acetyl-CoA contacts are provided by residues 80–82 (LVV) and 88–93 (RRGIAT). The 1D-myo-inositol 2-(L-cysteinylamino)-2-deoxy-alpha-D-glucopyranoside site is built by Glu179, Lys229, and Glu239. Residues 243 to 245 (LGV) and 250 to 256 (QGRGLGR) each bind acetyl-CoA. Tyr284 lines the 1D-myo-inositol 2-(L-cysteinylamino)-2-deoxy-alpha-D-glucopyranoside pocket. 289-294 (NIAAVR) provides a ligand contact to acetyl-CoA.

It belongs to the acetyltransferase family. MshD subfamily. As to quaternary structure, monomer.

The enzyme catalyses 1D-myo-inositol 2-(L-cysteinylamino)-2-deoxy-alpha-D-glucopyranoside + acetyl-CoA = mycothiol + CoA + H(+). Its function is as follows. Catalyzes the transfer of acetyl from acetyl-CoA to desacetylmycothiol (Cys-GlcN-Ins) to form mycothiol. This chain is Mycothiol acetyltransferase, found in Mycobacterium ulcerans (strain Agy99).